Consider the following 347-residue polypeptide: MIYPVIWQNNCVLLIDQTRLPNEYAVVEIHRSEEMARAIQTMIVRGAPAIGVAAAYGMYLGAREIETSERQEFLQKLEKVAQLLRATRPTAVNLFWAISRMLKTAYETLGTVAQIKENLLQTAQAINAEDLQTCQVIGDNGLAILPKTPTKLTLLTHCNAGALATAGYGTALGVVRSAWREGRLERLFADETRPRLQGAKLTTWECVQEGIPVTLITDNMAAHCMKQGLIDAVVVGADRIAANGDAANKIGTYSLAIVAKAHNVPFFVAAPVSTIDFELTDGSQIPIEERNPVEIYQVGDTTLTPPGVEFYNPAFDVTPAELITAIITENGAFAPCDLTKSSKQAVV.

Residues 45-47, arginine 88, and glutamine 197 contribute to the substrate site; that span reads RGA. Catalysis depends on aspartate 238, which acts as the Proton donor. 248 to 249 lines the substrate pocket; sequence NK.

Belongs to the eIF-2B alpha/beta/delta subunits family. MtnA subfamily.

The catalysed reaction is 5-(methylsulfanyl)-alpha-D-ribose 1-phosphate = 5-(methylsulfanyl)-D-ribulose 1-phosphate. The protein operates within amino-acid biosynthesis; L-methionine biosynthesis via salvage pathway; L-methionine from S-methyl-5-thio-alpha-D-ribose 1-phosphate: step 1/6. Functionally, catalyzes the interconversion of methylthioribose-1-phosphate (MTR-1-P) into methylthioribulose-1-phosphate (MTRu-1-P). The chain is Methylthioribose-1-phosphate isomerase from Trichormus variabilis (strain ATCC 29413 / PCC 7937) (Anabaena variabilis).